Consider the following 481-residue polypeptide: ATP synthase subunit beta (481 aa).

Position 167–174 (167–174 (GGAGVGKT)) interacts with ATP.

It belongs to the ATPase alpha/beta chains family. In terms of assembly, F-type ATPases have 2 components, CF(1) - the catalytic core - and CF(0) - the membrane proton channel. CF(1) has five subunits: alpha(3), beta(3), gamma(1), delta(1), epsilon(1). CF(0) has three main subunits: a(1), b(2) and c(9-12). The alpha and beta chains form an alternating ring which encloses part of the gamma chain. CF(1) is attached to CF(0) by a central stalk formed by the gamma and epsilon chains, while a peripheral stalk is formed by the delta and b chains.

The protein localises to the cell membrane. It carries out the reaction ATP + H2O + 4 H(+)(in) = ADP + phosphate + 5 H(+)(out). Functionally, produces ATP from ADP in the presence of a proton gradient across the membrane. The catalytic sites are hosted primarily by the beta subunits. The chain is ATP synthase subunit beta from Corynebacterium jeikeium (strain K411).